We begin with the raw amino-acid sequence, 98 residues long: Tan_12Cys (98 aa).

The N-terminal stretch at Met-1–Asp-21 is a signal peptide. Residues Arg-22–Lys-28 constitute a propeptide that is removed on maturation.

It belongs to the teretoxin C (TC) superfamily. Contains 6 disulfide bonds. In terms of tissue distribution, expressed by the venom duct.

It localises to the secreted. This Terebra anilis (Auger snail) protein is Tan_12Cys.